The chain runs to 210 residues: Cytochrome c biogenesis ATP-binding export protein CcmA (210 aa).

The 205-residue stretch at 4 to 208 (VPTLSFSKLG…GAIPAQLLEL (205 aa)) folds into the ABC transporter domain. 39 to 46 (GANGVGKT) serves as a coordination point for ATP.

Belongs to the ABC transporter superfamily. CcmA exporter (TC 3.A.1.107) family. As to quaternary structure, the complex is composed of two ATP-binding proteins (CcmA) and two transmembrane proteins (CcmB).

The protein resides in the cell inner membrane. The catalysed reaction is heme b(in) + ATP + H2O = heme b(out) + ADP + phosphate + H(+). Part of the ABC transporter complex CcmAB involved in the biogenesis of c-type cytochromes; once thought to export heme, this seems not to be the case, but its exact role is uncertain. Responsible for energy coupling to the transport system. This is Cytochrome c biogenesis ATP-binding export protein CcmA from Albidiferax ferrireducens (strain ATCC BAA-621 / DSM 15236 / T118) (Rhodoferax ferrireducens).